A 224-amino-acid chain; its full sequence is TBP-related factor (224 aa).

The tract at residues 14–34 (RDNVAATSNAAANPHAALQPQ) is disordered. Over residues 17–34 (VAATSNAAANPHAALQPQ) the composition is skewed to low complexity. Tandem repeats lie at residues 51–127 (LQNI…ARIL) and 141–218 (LQNI…SPIL).

The protein belongs to the TBP family. In terms of tissue distribution, primary spermatocytes in the adult testis and in a subset of cells in the dorsal medial region of the embryonic CNS.

The protein localises to the nucleus. Its function is as follows. Acts as a transcription factor. Binds to the TATA box promoter element which lies close to the position of transcription initiation. In terms of biological role, may be essential for embryonic development. This chain is TBP-related factor (Trf), found in Drosophila melanogaster (Fruit fly).